The following is a 156-amino-acid chain: Envelope glycoprotein L (156 aa).

A signal peptide spans 1 to 16; that stretch reads MSPLVAVLVFFSAALG. Residues 21-141 form an interaction with gH region; sequence GVAGNPHGLD…KELGEVAVHK (121 aa). In terms of domain architecture, gL alphaherpesvirus-type spans 50 to 156; the sequence is ELEWDDEDHP…LRYNGGPPAE (107 aa). Residues Cys71 and Cys95 are joined by a disulfide bond.

The protein belongs to the herpesviridae glycoprotein L (gL) family. Alphaherpesvirinae gL subfamily. In terms of assembly, interacts with glycoprotein H (gH); this interaction is necessary for the correct processing and cell surface expression of gH. The heterodimer gH/gL seems to interact with gB trimers during fusion. O-glycosylated, and sialylated.

It localises to the virion membrane. The protein localises to the host cell membrane. It is found in the host Golgi apparatus. Its subcellular location is the host trans-Golgi network. Functionally, the heterodimer glycoprotein H-glycoprotein L is required for the fusion of viral and plasma membranes leading to virus entry into the host cell. Acts as a functional inhibitor of gH and maintains gH in an inhibited form. Upon binding to host integrins, gL dissociates from gH leading to activation of the viral fusion glycoproteins gB and gH. The sequence is that of Envelope glycoprotein L from Sus scrofa (Pig).